The following is a 360-amino-acid chain: Peptide chain release factor 1 (360 aa).

Glutamine 235 carries the N5-methylglutamine modification. The segment covering 284-293 has biased composition (basic and acidic residues); that stretch reads HKRQQEEAST. The interval 284-305 is disordered; the sequence is HKRQQEEASTRRNLLGSGDRSD.

The protein belongs to the prokaryotic/mitochondrial release factor family. In terms of processing, methylated by PrmC. Methylation increases the termination efficiency of RF1.

The protein localises to the cytoplasm. In terms of biological role, peptide chain release factor 1 directs the termination of translation in response to the peptide chain termination codons UAG and UAA. This chain is Peptide chain release factor 1, found in Pectobacterium atrosepticum (strain SCRI 1043 / ATCC BAA-672) (Erwinia carotovora subsp. atroseptica).